The sequence spans 399 residues: Acetate kinase (399 aa).

Asn7 contributes to the Mg(2+) binding site. Residue Lys14 coordinates ATP. A substrate-binding site is contributed by Arg89. Catalysis depends on Asp146, which acts as the Proton donor/acceptor. ATP contacts are provided by residues 206 to 210 (HIGSG), 280 to 282 (DFR), and 328 to 332 (GIGEN). Position 382 (Glu382) interacts with Mg(2+).

The protein belongs to the acetokinase family. Homodimer. Requires Mg(2+) as cofactor. Mn(2+) is required as a cofactor.

The protein localises to the cytoplasm. The catalysed reaction is acetate + ATP = acetyl phosphate + ADP. Its pathway is metabolic intermediate biosynthesis; acetyl-CoA biosynthesis; acetyl-CoA from acetate: step 1/2. In terms of biological role, catalyzes the formation of acetyl phosphate from acetate and ATP. Can also catalyze the reverse reaction. The chain is Acetate kinase from Campylobacter hominis (strain ATCC BAA-381 / DSM 21671 / CCUG 45161 / LMG 19568 / NCTC 13146 / CH001A).